The following is a 206-amino-acid chain: Small ribosomal subunit protein uS4 (206 aa).

An S4 RNA-binding domain is found at Cys96–Ala156.

The protein belongs to the universal ribosomal protein uS4 family. Part of the 30S ribosomal subunit. Contacts protein S5. The interaction surface between S4 and S5 is involved in control of translational fidelity.

Functionally, one of the primary rRNA binding proteins, it binds directly to 16S rRNA where it nucleates assembly of the body of the 30S subunit. In terms of biological role, with S5 and S12 plays an important role in translational accuracy. In Ectopseudomonas mendocina (strain ymp) (Pseudomonas mendocina), this protein is Small ribosomal subunit protein uS4.